A 185-amino-acid polypeptide reads, in one-letter code: Peptidyl-tRNA hydrolase (185 aa).

TRNA is bound at residue Tyr14. Catalysis depends on His19, which acts as the Proton acceptor. 3 residues coordinate tRNA: Phe64, Asn66, and Asn112.

Belongs to the PTH family. Monomer.

It is found in the cytoplasm. It carries out the reaction an N-acyl-L-alpha-aminoacyl-tRNA + H2O = an N-acyl-L-amino acid + a tRNA + H(+). Hydrolyzes ribosome-free peptidyl-tRNAs (with 1 or more amino acids incorporated), which drop off the ribosome during protein synthesis, or as a result of ribosome stalling. Functionally, catalyzes the release of premature peptidyl moieties from peptidyl-tRNA molecules trapped in stalled 50S ribosomal subunits, and thus maintains levels of free tRNAs and 50S ribosomes. In Levilactobacillus brevis (strain ATCC 367 / BCRC 12310 / CIP 105137 / JCM 1170 / LMG 11437 / NCIMB 947 / NCTC 947) (Lactobacillus brevis), this protein is Peptidyl-tRNA hydrolase.